A 462-amino-acid polypeptide reads, in one-letter code: Retinoic acid receptor alpha (462 aa).

Positions 1-87 (MASNSSSCPT…PPPLPRIYKP (87 aa)) are modulating. Residues 52 to 64 (GYSTPSPATIETQ) are compositionally biased toward polar residues. The tract at residues 52–77 (GYSTPSPATIETQSSSSEEIVPSPPS) is disordered. The residue at position 77 (S77) is a Phosphoserine; by CDK7. NR C4-type zinc fingers lie at residues 88–108 (CFVC…CEGC) and 124–148 (CHRD…LQKC). Residues 88–153 (CFVCQDKSSG…RLQKCFDVGM (66 aa)) constitute a DNA-binding region (nuclear receptor). S96 carries the phosphoserine; by PKB/AKT1 modification. Residues 154–182 (SKESVRNDRNKKKKEAPKPECSESYTLTP) are hinge. Residues K166 and K171 each participate in a glycyl lysine isopeptide (Lys-Gly) (interchain with G-Cter in SUMO) cross-link. Positions 183-417 (EVGELIEKVR…PLIQEMLENS (235 aa)) constitute an NR LBD domain. A Phosphoserine; by PKA modification is found at S219. Residue C235 coordinates all-trans-retinoate. A UBR5-degron motif is present at residues 254–258 (IADQI). Residue S287 coordinates all-trans-retinoate. N6,N6,N6-trimethyllysine is present on K347. S369 is subject to Phosphoserine; by PKA and RPS6KA5. Residue K399 forms a Glycyl lysine isopeptide (Lys-Gly) (interchain with G-Cter in SUMO) linkage. The interval 404 to 419 (GSMPPLIQEMLENSEG) is required for binding corepressor NCOR1. The 9aaTAD signature appears at 408–416 (PLIQEMLEN). Residues 420 to 462 (LDTLSGQSGGGTRDGGGLAPPPGSCSPSLSPSSHRSSPATQSP) are disordered. Residues 426–437 (QSGGGTRDGGGL) show a composition bias toward gly residues. Residues 444 to 462 (CSPSLSPSSHRSSPATQSP) show a composition bias toward low complexity.

This sequence belongs to the nuclear hormone receptor family. NR1 subfamily. As to quaternary structure, heterodimer; with RXRA. Binds DNA preferentially as a heterodimer. RXRA serves as enhancer to induce RARA binding to RARE. Interacts with RXRG. Interacts with NCOA3 and NCOA6 coactivators, leading to a strong increase of transcription of target genes. Interacts with NCOA7; the interaction requires ligand-binding. Interacts (via the ligand-binding domain) with PRAME; interaction is direct and ligand (retinoic acid)-dependent. Interacts with PRKAR1A; the interaction negatively regulates RARA transcriptional activity. Interacts with NCOR1; the interaction occurs in the absence of ligand and represses transcriptional activity. Interacts with NCOR2. Interacts with PRMT2. Interacts with LRIF1. Interacts with ASXL1 and NCOA1. Interacts with ACTN4. Interacts with CDK7; the interaction is enhanced by interaction with GTF2H3. Interacts with GTF2H3; the interaction requires prior phosphorylation on Ser-369 which then enhances interaction with CDK7. In a complex with HDAC3, HDAC5 and HDAC7; the HDACs serve as corepressors of RARA, causing its deacetylation and inhibition of RARE DNA element binding; association with HDAC3, HDAC5 and HDAC7 is increased upon oscillatory shear stress. In the absence of hormonal ligand, interacts with TACC1. Phosphorylated on serine and threonine residues. Phosphorylation does not change during cell cycle. Phosphorylation on Ser-77 is crucial for the N-terminal AF1 transcriptional activity. Under stress conditions, MAPK8 enhances phosphorylation on Thr-181, Ser-445 and Ser-461 leading to RARA ubiquitination and degradation. Phosphorylation by AKT1 inhibits the transactivation activity. On retinoic acid stimulation, phosphorylation on Ser-369 by RPS6KA5 promotes interaction with GTF2H3 and the CDK7-mediated phosphorylation of Ser-77. Post-translationally, ubiquitinated by UBR5, leading to its degradation: UBR5 specifically recognizes and binds ligand-bound RARA when it is not associated with coactivators (NCOAs). In presence of NCOAs, the UBR5-degron is not accessible, preventing its ubiquitination and degradation. In terms of processing, sumoylated with SUMO2, mainly on Lys-399 which is also required for SENP6 binding. On all-trans retinoic acid (ATRA) binding, a conformational change may occur that allows sumoylation on two additional site, Lys-166 and Lys-171. Probably desumoylated by SENP6. Sumoylation levels determine nuclear localization and regulate ATRA-mediated transcriptional activity. Acetylated; acetylation is increased upon pulsatile shear stress and decreased upon oscillatory shear stress. As to expression, expressed in Sertoli cells and germ cells.

It localises to the nucleus. The protein resides in the cytoplasm. Its function is as follows. Receptor for retinoic acid. Retinoic acid receptors bind as heterodimers to their target response elements in response to their ligands, all-trans or 9-cis retinoic acid, and regulate gene expression in various biological processes. The RXR/RAR heterodimers bind to the retinoic acid response elements (RARE) composed of tandem 5'-AGGTCA-3' sites known as DR1-DR5. In the absence of ligand, the RXR-RAR heterodimers associate with a multiprotein complex containing transcription corepressors that induce histone deacetylation, chromatin condensation and transcriptional suppression. On ligand binding, the corepressors dissociate from the receptors and associate with the coactivators leading to transcriptional activation. Formation of heterocomplex with histone deacetylases might lead to inhibition of RARE DNA element binding and to transcriptional repression. Transcriptional activation and RARE DNA element binding might be supported by the transcription factor KLF2. RARA plays an essential role in the regulation of retinoic acid-induced germ cell development during spermatogenesis. Has a role in the survival of early spermatocytes at the beginning prophase of meiosis. In Sertoli cells, may promote the survival and development of early meiotic prophase spermatocytes. In concert with RARG, required for skeletal growth, matrix homeostasis and growth plate function. Together with RXRA, positively regulates microRNA-10a expression, thereby inhibiting the GATA6/VCAM1 signaling response to pulsatile shear stress in vascular endothelial cells. In association with HDAC3, HDAC5 and HDAC7 corepressors, plays a role in the repression of microRNA-10a and thereby promotes the inflammatory response. The sequence is that of Retinoic acid receptor alpha (Rara) from Mus musculus (Mouse).